The primary structure comprises 464 residues: UDP-N-acetylmuramoylalanine--D-glutamate ligase (464 aa).

Position 127–133 (127–133 (GSNGKST)) interacts with ATP.

Belongs to the MurCDEF family.

Its subcellular location is the cytoplasm. The catalysed reaction is UDP-N-acetyl-alpha-D-muramoyl-L-alanine + D-glutamate + ATP = UDP-N-acetyl-alpha-D-muramoyl-L-alanyl-D-glutamate + ADP + phosphate + H(+). It functions in the pathway cell wall biogenesis; peptidoglycan biosynthesis. Cell wall formation. Catalyzes the addition of glutamate to the nucleotide precursor UDP-N-acetylmuramoyl-L-alanine (UMA). This chain is UDP-N-acetylmuramoylalanine--D-glutamate ligase, found in Roseobacter denitrificans (strain ATCC 33942 / OCh 114) (Erythrobacter sp. (strain OCh 114)).